Here is a 386-residue protein sequence, read N- to C-terminus: DNA-directed RNA polymerase subunit Rpo1C (386 aa).

This sequence belongs to the RNA polymerase beta' chain family. In terms of assembly, part of the RNA polymerase complex.

It localises to the cytoplasm. The catalysed reaction is RNA(n) + a ribonucleoside 5'-triphosphate = RNA(n+1) + diphosphate. In terms of biological role, DNA-dependent RNA polymerase (RNAP) catalyzes the transcription of DNA into RNA using the four ribonucleoside triphosphates as substrates. Forms part of the jaw domain. The protein is DNA-directed RNA polymerase subunit Rpo1C of Methanococcus vannielii (strain ATCC 35089 / DSM 1224 / JCM 13029 / OCM 148 / SB).